Consider the following 152-residue polypeptide: Ribonuclease pancreatic beta-type (152 aa).

The first 25 residues, 1 to 25 (MGLXKSFALFSLLVLVLGWVQPSLS), serve as a signal peptide directing secretion. The segment at 25-53 (SGESRESSADKFKRQHMDPDSPSKSSPTY) is disordered. A compositionally biased stretch (basic and acidic residues) spans 27–45 (ESRESSADKFKRQHMDPDS). Substrate is bound by residues Lys-35 and Arg-38. His-40 (proton acceptor) is an active-site residue. Disulfide bonds link Cys-54–Cys-112, Cys-68–Cys-123, Cys-86–Cys-138, and Cys-93–Cys-100. Substrate-binding positions include 69–73 (KRVNT) and Lys-94. His-147 acts as the Proton donor in catalysis.

Belongs to the pancreatic ribonuclease family. In terms of assembly, monomer.

Its subcellular location is the secreted. The enzyme catalyses an [RNA] containing cytidine + H2O = an [RNA]-3'-cytidine-3'-phosphate + a 5'-hydroxy-ribonucleotide-3'-[RNA].. It carries out the reaction an [RNA] containing uridine + H2O = an [RNA]-3'-uridine-3'-phosphate + a 5'-hydroxy-ribonucleotide-3'-[RNA].. Its function is as follows. Endonuclease that catalyzes the cleavage of RNA on the 3' side of pyrimidine nucleotides. Acts on single-stranded and double-stranded RNA. The protein is Ribonuclease pancreatic beta-type of Rattus tiomanicus (Malayan field rat).